Here is a 53-residue protein sequence, read N- to C-terminus: Mannose/glucose-specific lectin alpha 2 chain (53 aa).

The protein belongs to the leguminous lectin family. In terms of assembly, tetramer of two alpha and two beta chains.

This is Mannose/glucose-specific lectin alpha 2 chain from Lathyrus ochrus (Cyprus-vetch).